Consider the following 211-residue polypeptide: MADDELETYRLWRIRKTVLQMVHDRGYLVAQDELDQPLETFKVQYGDRPSEKKPARSDLTILVAHNDDPADQMFVFFPEDAKIGIKTIKAICQQMQEQNISRAIIVVQTGMTPSAKQSIGDMAPKYMLEHFLEAELMVNITEHELVPEHVVMTAEEKAELLARYKLKDSQLPRIQQCDPVARYFGLRRGQVVKIIRPSETAGRYITYRLVV.

The protein belongs to the archaeal Rpo5/eukaryotic RPB5 RNA polymerase subunit family. Component of the RNA polymerase I (Pol I), RNA polymerase II (Pol II) and RNA polymerase III (Pol III) complexes consisting of at least 13, 12 and 17 subunits, respectively. In RNA Pol II, this subunit is present in 2-fold molar excess over the other subunits.

The protein resides in the nucleus. Its function is as follows. DNA-dependent RNA polymerase catalyzes the transcription of DNA into RNA using the four ribonucleoside triphosphates as substrates. Common component of RNA polymerases I, II and III which synthesize ribosomal RNA precursors, mRNA precursors and many functional non-coding RNAs, and small RNAs, such as 5S rRNA and tRNAs, respectively. Pol II is the central component of the basal RNA polymerase II transcription machinery. Pols are composed of mobile elements that move relative to each other. In Pol II, RPB5 is part of the lower jaw surrounding the central large cleft and thought to grab the incoming DNA template. Seems to be the major component in this process. The chain is DNA-directed RNA polymerases I, II, and III subunit RPABC1 (rpb-5) from Caenorhabditis elegans.